A 317-amino-acid chain; its full sequence is Ribosomal RNA small subunit methyltransferase H (317 aa).

Residues 37-39, aspartate 56, phenylalanine 85, aspartate 106, and glutamine 113 each bind S-adenosyl-L-methionine; that span reads AGH.

It belongs to the methyltransferase superfamily. RsmH family.

The protein localises to the cytoplasm. It catalyses the reaction cytidine(1402) in 16S rRNA + S-adenosyl-L-methionine = N(4)-methylcytidine(1402) in 16S rRNA + S-adenosyl-L-homocysteine + H(+). Functionally, specifically methylates the N4 position of cytidine in position 1402 (C1402) of 16S rRNA. This is Ribosomal RNA small subunit methyltransferase H from Lactococcus lactis subsp. cremoris (strain SK11).